A 407-amino-acid chain; its full sequence is Peptidase T (407 aa).

His82 lines the Zn(2+) pocket. Asp84 is an active-site residue. Asp143 serves as a coordination point for Zn(2+). Glu177 functions as the Proton acceptor in the catalytic mechanism. Zn(2+) is bound by residues Glu178, Asp200, and His382.

This sequence belongs to the peptidase M20B family. Zn(2+) is required as a cofactor.

The protein localises to the cytoplasm. The catalysed reaction is Release of the N-terminal residue from a tripeptide.. In terms of biological role, cleaves the N-terminal amino acid of tripeptides. The sequence is that of Peptidase T from Streptococcus pyogenes serotype M1.